A 2234-amino-acid chain; its full sequence is RNA-directed RNA polymerase L (2234 aa).

Residues 26–283 (ITVVTSQTEM…INLSDEKLSC (258 aa)) are endonuclease. Mn(2+)-binding residues include Glu-51, Asp-89, and Glu-102. The active site involves Lys-115. Residues 879-891 (KRDDHMKDSEDSK) show a composition bias toward basic and acidic residues. 2 disordered regions span residues 879-898 (KRDD…SSDL) and 927-949 (KLKE…QQKR). The segment covering 935-945 (RQSSSGSSLKN) has biased composition (polar residues). A RdRp catalytic domain is found at 1184 to 1383 (MEMKMSVNLG…FISSKFNKFV (200 aa)). Asp-1342 is a binding site for Mg(2+).

This sequence belongs to the Bunyavirales RNA polymerase family. In terms of assembly, homomultimer; the oligomeric structure is essential for the polymerase activity. Interacts with nucleoprotein N. Interacts with protein Z; this interaction inhibits viral transcription and replication, Z partially blocks the product exit tunnel for the releasing nascent RNA product. Requires Mn(2+) as cofactor. The cofactor is Mg(2+).

Its subcellular location is the virion. It localises to the host cytoplasm. The enzyme catalyses RNA(n) + a ribonucleoside 5'-triphosphate = RNA(n+1) + diphosphate. RNA-dependent RNA polymerase, which is responsible for the replication and transcription of the viral RNA genome using antigenomic RNA as an intermediate. During transcription, synthesizes subgenomic RNAs and assures their capping by a cap-snatching mechanism, which involves the endonuclease activity cleaving the host capped pre-mRNAs. These short capped RNAs are then used as primers for viral transcription. The 3'-end of subgenomic mRNAs molecules are heterogeneous and not polyadenylated. The replicase function is to direct synthesis of antigenomic and genomic RNA which are encapsidated and non capped. As a consequence of the use of the same enzyme for both transcription and replication, these mechanisms need to be well coordinated. These processes may be regulated by proteins N and Z in a dose-dependent manner. Z protein inhibits the viral polymerase L und thus the viral transcription and RNA synthesis. The protein is RNA-directed RNA polymerase L of Bolomys (OLVV).